Reading from the N-terminus, the 335-residue chain is Eukaryotic translation initiation factor 3 subunit I (335 aa).

WD repeat units lie at residues 8-47 (GHERALTQIRYNRDGDIIFSTAKDQHICAWYAHNGERLGT), 50-91 (GHQG…KTWD), 145-184 (CAESKATVAGWSYMSKYIIAGHEDGSVSQYDAKTGELLFN), 189-228 (EPDLQVTDLQWSPDRTYFITASKDKTAKLVNARDLEVMKT), and 286-325 (GHFGPLNTVAVDPNGKGYASGGEDGYVRVHQFDKGYFDFT).

Belongs to the eIF-3 subunit I family. Component of the eukaryotic translation initiation factor 3 (eIF-3) complex.

It localises to the cytoplasm. In terms of biological role, component of the eukaryotic translation initiation factor 3 (eIF-3) complex, which is involved in protein synthesis of a specialized repertoire of mRNAs and, together with other initiation factors, stimulates binding of mRNA and methionyl-tRNAi to the 40S ribosome. The eIF-3 complex specifically targets and initiates translation of a subset of mRNAs involved in cell proliferation. This is Eukaryotic translation initiation factor 3 subunit I (tif34) from Botryotinia fuckeliana (strain B05.10) (Noble rot fungus).